A 267-amino-acid polypeptide reads, in one-letter code: Tryptophan synthase alpha chain (267 aa).

Residues E49 and D60 each act as proton acceptor in the active site.

It belongs to the TrpA family. Tetramer of two alpha and two beta chains.

It carries out the reaction (1S,2R)-1-C-(indol-3-yl)glycerol 3-phosphate + L-serine = D-glyceraldehyde 3-phosphate + L-tryptophan + H2O. Its pathway is amino-acid biosynthesis; L-tryptophan biosynthesis; L-tryptophan from chorismate: step 5/5. In terms of biological role, the alpha subunit is responsible for the aldol cleavage of indoleglycerol phosphate to indole and glyceraldehyde 3-phosphate. The protein is Tryptophan synthase alpha chain of Citrifermentans bemidjiense (strain ATCC BAA-1014 / DSM 16622 / JCM 12645 / Bem) (Geobacter bemidjiensis).